We begin with the raw amino-acid sequence, 103 residues long: Small ubiquitin-related modifier 3 (103 aa).

Glycyl lysine isopeptide (Lys-Gly) (interchain with G-Cter in SUMO2) cross-links involve residues Lys5 and Lys7. A Glycyl lysine isopeptide (Lys-Gly) (interchain with G-Cter in SUMO); alternate cross-link involves residue Lys11. Lys11 is covalently cross-linked (Glycyl lysine isopeptide (Lys-Gly) (interchain with G-Cter in SUMO2); alternate). Positions 15-92 (DHINLKVAGQ…IDVFQQQTGG (78 aa)) constitute a Ubiquitin-like domain. Residue Gly92 forms a Glycyl lysine isopeptide (Gly-Lys) (interchain with K-? in acceptor proteins) linkage. Residues 93–103 (VPESSLAGHSF) constitute a propeptide that is removed on maturation.

It belongs to the ubiquitin family. SUMO subfamily. As to quaternary structure, covalently attached to a number of proteins. Interacts with BMAL1. Interacts with USP25 (via ts SIM domain); the interaction sumoylates USP25 and inhibits its ubiquitin hydrolyzing activity. Interacts with SAE2 and UBE2I. In terms of processing, polymeric chains can be formed through Lys-11 cross-linking. Cleavage of precursor form by SENP1, SENP2 or SENP5 is necessary for function. In terms of tissue distribution, expressed predominantly in liver.

It is found in the cytoplasm. Its subcellular location is the nucleus. The protein localises to the PML body. Ubiquitin-like protein which can be covalently attached to target lysines either as a monomer or as a lysine-linked polymer. Does not seem to be involved in protein degradation and may function as an antagonist of ubiquitin in the degradation process. Plays a role in a number of cellular processes such as nuclear transport, DNA replication and repair, mitosis and signal transduction. Covalent attachment to its substrates requires prior activation by the E1 complex SAE1-SAE2 and linkage to the E2 enzyme UBE2I, and can be promoted by an E3 ligase such as PIAS1-4, RANBP2 or CBX4. Plays a role in the regulation of sumoylation status of SETX. The polypeptide is Small ubiquitin-related modifier 3 (Homo sapiens (Human)).